Consider the following 241-residue polypeptide: Geranylgeranylglyceryl phosphate synthase (241 aa).

Mg(2+)-binding residues include Asp-26 and Ser-52. Residues 172–178 (YFEAGSG), 204–205 (GG), and 226–227 (GT) each bind sn-glycerol 1-phosphate.

The protein belongs to the GGGP/HepGP synthase family. Group II subfamily. Mg(2+) is required as a cofactor.

The protein resides in the cytoplasm. It catalyses the reaction sn-glycerol 1-phosphate + (2E,6E,10E)-geranylgeranyl diphosphate = sn-3-O-(geranylgeranyl)glycerol 1-phosphate + diphosphate. The protein operates within membrane lipid metabolism; glycerophospholipid metabolism. Prenyltransferase that catalyzes the transfer of the geranylgeranyl moiety of geranylgeranyl diphosphate (GGPP) to the C3 hydroxyl of sn-glycerol-1-phosphate (G1P). This reaction is the first ether-bond-formation step in the biosynthesis of archaeal membrane lipids. In Hyperthermus butylicus (strain DSM 5456 / JCM 9403 / PLM1-5), this protein is Geranylgeranylglyceryl phosphate synthase.